Consider the following 168-residue polypeptide: G/U mismatch-specific DNA glycosylase (168 aa).

It belongs to the uracil-DNA glycosylase (UDG) superfamily. TDG/mug family. In terms of assembly, binds DNA as a monomer.

It is found in the cytoplasm. The enzyme catalyses Specifically hydrolyzes mismatched double-stranded DNA and polynucleotides, releasing free uracil.. In terms of biological role, excises ethenocytosine and uracil, which can arise by alkylation or deamination of cytosine, respectively, from the corresponding mispairs with guanine in ds-DNA. It is capable of hydrolyzing the carbon-nitrogen bond between the sugar-phosphate backbone of the DNA and the mispaired base. The complementary strand guanine functions in substrate recognition. Required for DNA damage lesion repair in stationary-phase cells. In Klebsiella pneumoniae subsp. pneumoniae (strain ATCC 700721 / MGH 78578), this protein is G/U mismatch-specific DNA glycosylase.